We begin with the raw amino-acid sequence, 418 residues long: Gamma-glutamyl phosphate reductase (418 aa).

It belongs to the gamma-glutamyl phosphate reductase family.

The protein localises to the cytoplasm. It catalyses the reaction L-glutamate 5-semialdehyde + phosphate + NADP(+) = L-glutamyl 5-phosphate + NADPH + H(+). It functions in the pathway amino-acid biosynthesis; L-proline biosynthesis; L-glutamate 5-semialdehyde from L-glutamate: step 2/2. Catalyzes the NADPH-dependent reduction of L-glutamate 5-phosphate into L-glutamate 5-semialdehyde and phosphate. The product spontaneously undergoes cyclization to form 1-pyrroline-5-carboxylate. The protein is Gamma-glutamyl phosphate reductase of Desulfatibacillum aliphaticivorans.